The chain runs to 290 residues: MTGIKFDQGKAPLSLIDPRFTEEVARVLAIGEQKYGRANWQGLKIERLLDAVKRHVLELEKSNDHDDETGLHHAAHAASGLMFIFWLLNNRPTSDDRRWSAAVPGVREQRGSVQPVPDSEEGLDMQPVPAPSPSRSKKRAYSTGTIADVQKLISGWADRTFPDRTIGEAILKLKKELAELDTASYLDAGEFADVAILLLDIAQLAGIDIATAVANKMAINERRVWQRLEDGTHQHVIDGGRTDGVDPIIRVAMLPTDPTGSHLCVVCGQRFGSEDDRASHYTTTHGDRKP.

Positions 103–141 are disordered; that stretch reads VPGVREQRGSVQPVPDSEEGLDMQPVPAPSPSRSKKRAY. Residues 262-285 form a C2H2-type zinc finger; it reads HLCVVCGQRFGSEDDRASHYTTTH.

Belongs to the Caudovirales dATP/dGTP diphosphohydrolase family. The cofactor is Co(2+).

It catalyses the reaction dGTP + H2O = dGMP + diphosphate + H(+). The enzyme catalyses dATP + H2O = dAMP + diphosphate + H(+). It functions in the pathway purine metabolism. Catalyzes the hydrolysis of dGTP into dGMP, which is needed among other for the first step of biosynthesis of dZTP (2-amino-2'-deoxyadenosine-5'-triphosphate). The sequence is that of dATP/dGTP diphosphohydrolase from Salmonella phage PMBT28.